A 687-amino-acid chain; its full sequence is Fimbrin-5 (687 aa).

In terms of domain architecture, EF-hand spans 7–74 (VLVSDPWLQS…KSVLDKSYPN (68 aa)). 4 Calponin-homology (CH) domains span residues 122-239 (ESEK…KIQM), 267-370 (LAPE…QHRN), 392-498 (SREE…RYTM), and 513-621 (EITD…YWSL). Actin-binding regions lie at residues 122-370 (ESEK…QHRN) and 392-621 (SREE…YWSL). A disordered region spans residues 628–687 (ESTVSEDATDDGDANSVAGEISNLSIDGASESSPTVQDQELLTKADNDEDEVDGENNKDA). Residues 649–667 (SNLSIDGASESSPTVQDQE) are compositionally biased toward polar residues.

In terms of assembly, interacts with F-actin. Expressed in mature pollen.

It localises to the cytoplasm. The protein resides in the cytoskeleton. In terms of biological role, cross-links actin filaments (F-actin) in a calcium independent manner. Induces the formation of actin bundles. Stabilizes and prevents F-actin depolymerization mediated by latrunculin B (LatB). This is Fimbrin-5 from Arabidopsis thaliana (Mouse-ear cress).